Consider the following 280-residue polypeptide: MLSYRHSFHAGNHADVLKHTVQSLIIESLKEKDKPFLYLDTHAGAGRYQLGSEHAERTGEYLEGIARIWQQDDLPAELEAYINVVKHFNRSGQLRYYPGSPLIARLLLREQDSLQLTELHPSDYPLLRSEFQKDSRARVEKADGFQQLKAKLPPVSRRGLILIDPPYEMKTDYQAVVSGIAEGYKRFATGIYALWYPVVLRQQIKRMIHDLEATGIRKILQIELAVLPDSDRRGMTASGMIVINPPWKLEQQMNNVLPWLHSKLVPAGTGHATVSWIVPE.

S-adenosyl-L-methionine contacts are provided by residues His-19, His-42, Ser-100, Glu-118, 143 to 144 (DG), and Asp-164. Asp-164 functions as the Proton acceptor in the catalytic mechanism.

The protein belongs to the RlmJ family. As to quaternary structure, monomer.

The enzyme catalyses adenosine(2030) in 23S rRNA + S-adenosyl-L-methionine = N(6)-methyladenosine(2030) in 23S rRNA + S-adenosyl-L-homocysteine + H(+). Functionally, specifically methylates the adenine in position 2030 of 23S rRNA. Nascent 23S rRNA seems to be the natural substrate. Appears to be not necessary for ribosome assembly. Required for the utilization of extracellular DNA as the sole source of carbon and energy. The chain is Ribosomal RNA large subunit methyltransferase J from Escherichia coli (strain K12).